The primary structure comprises 218 residues: MMDRFQKQRLRMVDTQIRARGVLNPRILEAMSRIPRHLFVEEALADQAYNDNPLPIGDMQTISQPYIVALMTDALDLKGREKVLEIGTGSGYQTALLAELADQVFSIERIASLANNARRILDQLGYYNVAIRIGDGTYGWKEESPFDAILVTAGAPDIPMPLIEQLKIGGRLVLPVGGRHIQDLVKVTRLSEDINELKKENLGGCRFVDLIGEYGWSG.

S63 is a catalytic residue.

This sequence belongs to the methyltransferase superfamily. L-isoaspartyl/D-aspartyl protein methyltransferase family.

It localises to the cytoplasm. The catalysed reaction is [protein]-L-isoaspartate + S-adenosyl-L-methionine = [protein]-L-isoaspartate alpha-methyl ester + S-adenosyl-L-homocysteine. Its function is as follows. Catalyzes the methyl esterification of L-isoaspartyl residues in peptides and proteins that result from spontaneous decomposition of normal L-aspartyl and L-asparaginyl residues. It plays a role in the repair and/or degradation of damaged proteins. The protein is Protein-L-isoaspartate O-methyltransferase of Syntrophus aciditrophicus (strain SB).